The following is a 201-amino-acid chain: Recombination protein RecR (201 aa).

A C4-type zinc finger spans residues 60–75 (CSVCGNVDTIDPCSIC). Positions 83-178 (ATIIVVEDIA…KVTRLAHGVP (96 aa)) constitute a Toprim domain.

It belongs to the RecR family.

Functionally, may play a role in DNA repair. It seems to be involved in an RecBC-independent recombinational process of DNA repair. It may act with RecF and RecO. The chain is Recombination protein RecR from Bartonella henselae (strain ATCC 49882 / DSM 28221 / CCUG 30454 / Houston 1) (Rochalimaea henselae).